We begin with the raw amino-acid sequence, 490 residues long: GTPase Der (490 aa).

2 EngA-type G domains span residues 3–166 (PVIA…PKDE) and 196–369 (IKIA…KSAV). Residues 9 to 16 (GRPNVGKS), 56 to 60 (DTGGI), 118 to 121 (NKID), 202 to 209 (GRPNVGKS), 249 to 253 (DTAGV), and 314 to 317 (NKWD) each bind GTP. In terms of domain architecture, KH-like spans 370-454 (TRWPTSRLTQ…PIRIEFKGGE (85 aa)). Residues 452–490 (GGENPYEGNKNTLTDRQVNKKRRMMSHHKKADKKRRDKR) are disordered. Residues 470–490 (NKKRRMMSHHKKADKKRRDKR) are compositionally biased toward basic residues.

It belongs to the TRAFAC class TrmE-Era-EngA-EngB-Septin-like GTPase superfamily. EngA (Der) GTPase family. Associates with the 50S ribosomal subunit.

GTPase that plays an essential role in the late steps of ribosome biogenesis. This is GTPase Der from Pseudomonas savastanoi pv. phaseolicola (strain 1448A / Race 6) (Pseudomonas syringae pv. phaseolicola (strain 1448A / Race 6)).